We begin with the raw amino-acid sequence, 130 residues long: Small ribosomal subunit protein uS8 (130 aa).

Belongs to the universal ribosomal protein uS8 family. Part of the 30S ribosomal subunit. Contacts proteins S5 and S12.

Its function is as follows. One of the primary rRNA binding proteins, it binds directly to 16S rRNA central domain where it helps coordinate assembly of the platform of the 30S subunit. The sequence is that of Small ribosomal subunit protein uS8 from Wigglesworthia glossinidia brevipalpis.